The primary structure comprises 725 residues: Glutamine-dependent NAD(+) synthetase (725 aa).

The 271-residue stretch at 5 to 275 (VTVATCALNQ…VEVLTATLDL (271 aa)) folds into the CN hydrolase domain. The Proton acceptor; for glutaminase activity role is filled by Glu45. The For glutaminase activity role is filled by Lys114. Cys175 functions as the Nucleophile; for glutaminase activity in the catalytic mechanism. Positions 325 to 706 (YHRPEEEISL…KTSQTLEEQI (382 aa)) are ligase. Residue 355 to 362 (PLSGGVDS) participates in ATP binding. Ser357 is an active-site residue.

In the C-terminal section; belongs to the NAD synthetase family. In terms of assembly, homohexamer.

It carries out the reaction deamido-NAD(+) + L-glutamine + ATP + H2O = L-glutamate + AMP + diphosphate + NAD(+) + H(+). The protein operates within cofactor biosynthesis; NAD(+) biosynthesis; NAD(+) from deamido-NAD(+) (L-Gln route): step 1/1. In terms of biological role, catalyzes the final step of the nicotinamide adenine dinucleotide (NAD) de novo synthesis pathway, the ATP-dependent amidation of deamido-NAD using L-glutamine as a nitrogen source. In Rattus norvegicus (Rat), this protein is Glutamine-dependent NAD(+) synthetase (Nadsyn1).